We begin with the raw amino-acid sequence, 151 residues long: Protein-export protein SecB (151 aa).

Belongs to the SecB family. As to quaternary structure, homotetramer, a dimer of dimers. One homotetramer interacts with 1 SecA dimer.

It is found in the cytoplasm. One of the proteins required for the normal export of preproteins out of the cell cytoplasm. It is a molecular chaperone that binds to a subset of precursor proteins, maintaining them in a translocation-competent state. It also specifically binds to its receptor SecA. The chain is Protein-export protein SecB from Acinetobacter baylyi (strain ATCC 33305 / BD413 / ADP1).